A 114-amino-acid polypeptide reads, in one-letter code: Cytochrome c oxidase subunit 7A2-like, mitochondrial (114 aa).

The N-terminal 55 residues, 1–55, are a transit peptide targeting the mitochondrion; that stretch reads MYYKFSGFTQKLAGAWASEAYSPQGLKPVVSTEAPPIIFATPTKLTSDSTVYDYA. At K69 the chain carries N6-acetyllysine. A helical transmembrane segment spans residues 82–107; that stretch reads PDQMLYRTTMALTVGGTIYCLIALYM.

Belongs to the cytochrome c oxidase VIIa family. As to quaternary structure, interacts with the mitochondrial respiratory complexes III (CIII) and IV (CIV), promoting their association.

It is found in the mitochondrion inner membrane. Functionally, assembly factor that mediates the formation of some mitochondrial respiratory supercomplexes (respirasomes), thereby promoting oxidative phosphorylation and energy metabolism. Acts as a molecular adapter that associates with both mitochondrial respiratory complexes III (CIII) and IV (CIV), promoting their association. Mediates the formation of various mitochondrial respiratory supercomplexes, such as MCIII(2)IV(2), composed of two CIII and two CIV, and the CS-respirasome (MCI(1)III(2)IV(2)), composed of one CI, two CIII and two CIV. Not involved in the formation of the canonical respirasome (MCI(1)III(2)IV(1)), composed of one CI, two CIII and one CIV. The formation of different respirasomes is important for cell adaptation to oxygen conditions and prevent metabolic exhaustion: supercomplexes mediated by COX7A2L/SCAF1 are required to maintain oxidative phosphorylation upon low oxygen conditions and promote metabolic rewiring toward glycolysis. This Homo sapiens (Human) protein is Cytochrome c oxidase subunit 7A2-like, mitochondrial.